We begin with the raw amino-acid sequence, 159 residues long: SsrA-binding protein (159 aa).

The disordered stretch occupies residues 138 to 159 (KRDTLKDKDWQRQKERMMKHSV).

It belongs to the SmpB family.

It localises to the cytoplasm. Its function is as follows. Required for rescue of stalled ribosomes mediated by trans-translation. Binds to transfer-messenger RNA (tmRNA), required for stable association of tmRNA with ribosomes. tmRNA and SmpB together mimic tRNA shape, replacing the anticodon stem-loop with SmpB. tmRNA is encoded by the ssrA gene; the 2 termini fold to resemble tRNA(Ala) and it encodes a 'tag peptide', a short internal open reading frame. During trans-translation Ala-aminoacylated tmRNA acts like a tRNA, entering the A-site of stalled ribosomes, displacing the stalled mRNA. The ribosome then switches to translate the ORF on the tmRNA; the nascent peptide is terminated with the 'tag peptide' encoded by the tmRNA and targeted for degradation. The ribosome is freed to recommence translation, which seems to be the essential function of trans-translation. This chain is SsrA-binding protein, found in Alteromonas mediterranea (strain DSM 17117 / CIP 110805 / LMG 28347 / Deep ecotype).